A 603-amino-acid polypeptide reads, in one-letter code: NADH-ubiquinone oxidoreductase chain 5 (603 aa).

A run of 15 helical transmembrane segments spans residues 4-24 (ISTL…TTLL), 35-55 (ITKT…LLFV), 84-104 (FFSL…MEFS), 121-141 (LLLF…LQLF), 177-197 (IGDM…NSWE), 213-233 (LLGL…HPWL), 241-261 (TPVS…FTLI), 273-293 (VQTS…ICAL), 301-320 (IIAL…IGIN), 325-347 (AFTH…GSII), 366-386 (MPIT…MPFL), 413-433 (LIAV…ALLG), 457-477 (LILG…PHTT), 480-500 (MTMP…GFTV), and 583-603 (LMKL…LIAL).

It belongs to the complex I subunit 5 family. In terms of assembly, core subunit of respiratory chain NADH dehydrogenase (Complex I) which is composed of 45 different subunits.

It is found in the mitochondrion inner membrane. The catalysed reaction is a ubiquinone + NADH + 5 H(+)(in) = a ubiquinol + NAD(+) + 4 H(+)(out). In terms of biological role, core subunit of the mitochondrial membrane respiratory chain NADH dehydrogenase (Complex I) which catalyzes electron transfer from NADH through the respiratory chain, using ubiquinone as an electron acceptor. Essential for the catalytic activity and assembly of complex I. The chain is NADH-ubiquinone oxidoreductase chain 5 (MT-ND5) from Mammuthus primigenius (Siberian woolly mammoth).